The sequence spans 323 residues: MMGQNQTSISDFLLLGLPIQPEQQNLCYALFLAMYLTTLLGNLLIIVLIRLDSHLHTPVYLFLSNLSFSDLCFSSVTMPKLLQNMQNQDPSIPYADCLTQMYFFLYFSDLESFLLVAMAYDRYVAICFPMHYTAICFLLHYTAIMSPMLCLSVVALSWVLTTFHAMLHTLLMARLCFCADNVIPHFFCDMSALLKLACSDTRVNEWVIFIMGGLILVIPFLLILGSYARIVSSILKVPSSKGICKAFSTCGSHLSVVSLFYGTVIGLYLCPSANSSTLKDTVMAMMYTVVTPMLTPFIYSLRNRDMKGALERVICKRKNPFLL.

Residues 1 to 25 lie on the Extracellular side of the membrane; sequence MMGQNQTSISDFLLLGLPIQPEQQN. Residue Asn-5 is glycosylated (N-linked (GlcNAc...) asparagine). The helical transmembrane segment at 26 to 49 threads the bilayer; it reads LCYALFLAMYLTTLLGNLLIIVLI. At 50–57 the chain is on the cytoplasmic side; that stretch reads RLDSHLHT. The helical transmembrane segment at 58–79 threads the bilayer; that stretch reads PVYLFLSNLSFSDLCFSSVTMP. Residues 80–100 are Extracellular-facing; the sequence is KLLQNMQNQDPSIPYADCLTQ. Cys-97 and Cys-198 are joined by a disulfide. Residues 101–120 form a helical membrane-spanning segment; it reads MYFFLYFSDLESFLLVAMAY. The Cytoplasmic segment spans residues 121-148; that stretch reads DRYVAICFPMHYTAICFLLHYTAIMSPM. A helical membrane pass occupies residues 149–167; that stretch reads LCLSVVALSWVLTTFHAML. The Extracellular segment spans residues 168-205; sequence HTLLMARLCFCADNVIPHFFCDMSALLKLACSDTRVNE. A helical transmembrane segment spans residues 206–228; that stretch reads WVIFIMGGLILVIPFLLILGSYA. At 229-245 the chain is on the cytoplasmic side; that stretch reads RIVSSILKVPSSKGICK. Residues 246-269 traverse the membrane as a helical segment; the sequence is AFSTCGSHLSVVSLFYGTVIGLYL. The Extracellular segment spans residues 270-281; it reads CPSANSSTLKDT. A glycan (N-linked (GlcNAc...) asparagine) is linked at Asn-274. A helical transmembrane segment spans residues 282–301; the sequence is VMAMMYTVVTPMLTPFIYSL. Residues 302-323 are Cytoplasmic-facing; that stretch reads RNRDMKGALERVICKRKNPFLL.

This sequence belongs to the G-protein coupled receptor 1 family.

The protein resides in the cell membrane. Functionally, odorant receptor. The sequence is that of Olfactory receptor 1E2 (OR1E2) from Homo sapiens (Human).